The sequence spans 552 residues: Urocanate hydratase (552 aa).

NAD(+)-binding positions include 48-49 (GG), Gln-126, 172-174 (GMG), Asp-192, 238-239 (NA), 259-263 (QTSAH), 268-269 (YL), and Tyr-317. Residue Cys-405 is part of the active site. Gly-487 provides a ligand contact to NAD(+).

The protein belongs to the urocanase family. Requires NAD(+) as cofactor.

It is found in the cytoplasm. It catalyses the reaction 4-imidazolone-5-propanoate = trans-urocanate + H2O. It participates in amino-acid degradation; L-histidine degradation into L-glutamate; N-formimidoyl-L-glutamate from L-histidine: step 2/3. Functionally, catalyzes the conversion of urocanate to 4-imidazolone-5-propionate. The chain is Urocanate hydratase from Streptomyces griseus subsp. griseus (strain JCM 4626 / CBS 651.72 / NBRC 13350 / KCC S-0626 / ISP 5235).